The chain runs to 486 residues: Protein nucleotidyltransferase YdiU (486 aa).

ATP-binding residues include glycine 90, glycine 92, arginine 93, lysine 113, aspartate 125, glycine 126, arginine 176, and arginine 183. The active-site Proton acceptor is aspartate 252. 2 residues coordinate Mg(2+): asparagine 253 and aspartate 262. Residue aspartate 262 coordinates ATP.

This sequence belongs to the SELO family. Mg(2+) serves as cofactor. Requires Mn(2+) as cofactor.

The catalysed reaction is L-seryl-[protein] + ATP = 3-O-(5'-adenylyl)-L-seryl-[protein] + diphosphate. The enzyme catalyses L-threonyl-[protein] + ATP = 3-O-(5'-adenylyl)-L-threonyl-[protein] + diphosphate. It carries out the reaction L-tyrosyl-[protein] + ATP = O-(5'-adenylyl)-L-tyrosyl-[protein] + diphosphate. It catalyses the reaction L-histidyl-[protein] + UTP = N(tele)-(5'-uridylyl)-L-histidyl-[protein] + diphosphate. The catalysed reaction is L-seryl-[protein] + UTP = O-(5'-uridylyl)-L-seryl-[protein] + diphosphate. The enzyme catalyses L-tyrosyl-[protein] + UTP = O-(5'-uridylyl)-L-tyrosyl-[protein] + diphosphate. Its function is as follows. Nucleotidyltransferase involved in the post-translational modification of proteins. It can catalyze the addition of adenosine monophosphate (AMP) or uridine monophosphate (UMP) to a protein, resulting in modifications known as AMPylation and UMPylation. The polypeptide is Protein nucleotidyltransferase YdiU (Stutzerimonas stutzeri (strain A1501) (Pseudomonas stutzeri)).